The following is a 364-amino-acid chain: Cell division protein FtsZ 1 (364 aa).

GTP is bound by residues 47-48 (GA), 97-99 (AGG), 134-136 (GTG), E165, R169, and D212.

Belongs to the FtsZ family. In terms of assembly, homodimer. Polymerizes to form a dynamic ring structure in a strictly GTP-dependent manner. Interacts directly with several other division proteins.

The protein localises to the cytoplasm. Its function is as follows. Essential cell division protein that forms a contractile ring structure (Z ring) at the future cell division site. The regulation of the ring assembly controls the timing and the location of cell division. One of the functions of the FtsZ ring is to recruit other cell division proteins to the septum to produce a new cell wall between the dividing cells. Binds GTP and shows GTPase activity. This chain is Cell division protein FtsZ 1, found in Methanocaldococcus jannaschii (strain ATCC 43067 / DSM 2661 / JAL-1 / JCM 10045 / NBRC 100440) (Methanococcus jannaschii).